The chain runs to 682 residues: Probable glycosyl transferase Gly (682 aa).

Residues 21–26 (CASFSD) and 112–113 (DC) each bind UDP. Mn(2+)-binding residues include aspartate 112, aspartate 114, and histidine 230. 230 to 236 (HYLPERK) serves as a coordination point for UDP.

The protein belongs to the glycosyltransferase 8 family. As to quaternary structure, part of the accessory SecA2/SecY2 protein translocation apparatus required to export cell wall protein GspB.

In terms of biological role, part of the accessory SecA2/SecY2 system specifically required to export GspB, a serine-rich repeat cell wall protein encoded upstream in the same operon. This is Probable glycosyl transferase Gly (gly) from Streptococcus gordonii.